The primary structure comprises 369 residues: Probable dual-specificity RNA methyltransferase RlmN (369 aa).

Residue Glu98 is the Proton acceptor of the active site. A Radical SAM core domain is found at Ser106 to Asp341. A disulfide bridge connects residues Cys113 and Cys346. 3 residues coordinate [4Fe-4S] cluster: Cys120, Cys124, and Cys127. S-adenosyl-L-methionine-binding positions include Gly171–Glu172, Ser204, Ser227–His229, and Asn303. Cys346 acts as the S-methylcysteine intermediate in catalysis.

Belongs to the radical SAM superfamily. RlmN family. [4Fe-4S] cluster is required as a cofactor.

The protein localises to the cytoplasm. It catalyses the reaction adenosine(2503) in 23S rRNA + 2 reduced [2Fe-2S]-[ferredoxin] + 2 S-adenosyl-L-methionine = 2-methyladenosine(2503) in 23S rRNA + 5'-deoxyadenosine + L-methionine + 2 oxidized [2Fe-2S]-[ferredoxin] + S-adenosyl-L-homocysteine. The catalysed reaction is adenosine(37) in tRNA + 2 reduced [2Fe-2S]-[ferredoxin] + 2 S-adenosyl-L-methionine = 2-methyladenosine(37) in tRNA + 5'-deoxyadenosine + L-methionine + 2 oxidized [2Fe-2S]-[ferredoxin] + S-adenosyl-L-homocysteine. Its function is as follows. Specifically methylates position 2 of adenine 2503 in 23S rRNA and position 2 of adenine 37 in tRNAs. The chain is Probable dual-specificity RNA methyltransferase RlmN from Chloroherpeton thalassium (strain ATCC 35110 / GB-78).